Consider the following 552-residue polypeptide: MAKFHAPVIQDNPSGWGPCAVPEKFKDMPYQPFSKGDRLGKVADWTGATYQDKRYTNKYSSQFGGGSQYAYFHEEDEASFQLVDTAKTQKTAYQRNRMRFAQRNLRRDKDRRTLTQFNMQTLPKSAKQKERDRMRLQKKFQKQFGVRQKWDQKSQAQLKPRDSSVEVRSDWEVKEEMDFPRLMKMRYMDVADPLDIECCGALEHYDKAFDRITTRNEKPLKSIKRIFHTVTTTDDPVIRKLAKTQGNVFATDAILATLMCCTRSVNSWDIIVQRVGNKLFFDKRDNSDFDLLTVSETANEPPQDEGSSLNSPRNLAMEATYINHNFSQQCLRMGGERYKFPNPNPFVEEDTEKSEVASVAYRYRRWKLGEDIDLIVRCEHDGVMTGANGEVSFINVKTLNEWDSRYCNGVDWRQKLDSQRGAVLATELKNNSYKLARWTCCAILAGSEYLKLGYVSRYHVKDSSRHVVLGTQQFKPNEFASQINLSMENAWGILRCVIDICRKLEEGKYLILKDPNKQVIRVYSLPDGTFSSDEDEEEDDEDEEDEEEDEDN.

The tract at residues 288 to 302 (DFDLLTVSETANEPP) is RNA gate. The segment at 525 to 552 (LPDGTFSSDEDEEEDDEDEEDEEEDEDN) is disordered. Positions 532-552 (SDEDEEEDDEDEEDEEEDEDN) are enriched in acidic residues.

The protein belongs to the eIF-3 subunit D family. In terms of assembly, component of the eukaryotic translation initiation factor 3 (eIF-3) complex, which is composed of 13 subunits: eif3a, eif3b, eif3c, eif3d, eif3e, eif3f, eif3g, eif3h, eif3i, eif3j, eif3k, eif3l and eif3m.

It is found in the cytoplasm. In terms of biological role, mRNA cap-binding component of the eukaryotic translation initiation factor 3 (eIF-3) complex, which is involved in protein synthesis of a specialized repertoire of mRNAs and, together with other initiation factors, stimulates binding of mRNA and methionyl-tRNAi to the 40S ribosome. The eIF-3 complex specifically targets and initiates translation of a subset of mRNAs involved in cell proliferation. In the eIF-3 complex, eif3d specifically recognizes and binds the 7-methylguanosine cap of a subset of mRNAs. This is Eukaryotic translation initiation factor 3 subunit D (eif3d) from Danio rerio (Zebrafish).